A 1462-amino-acid polypeptide reads, in one-letter code: MGARNSVLRGKKADELEKVRLRPNGKKRYRLKHVVWAANELDRFGLAESLLESKEGCQKILKVLEPLVPTGSENLKSLFNTVCVIWCLHAEEKVKDTEEAKKLAQRHLVAETGTAEKMPNISRPTAPPSGKGGNFPVQQAGGNYIHVPLSPRTLNAWVKLVEEKKFGAEVVPGFQALSEGCTPYDINQMLNCVGDHQAAMQIIREIINEEAADWDAQHPIPGPLPAGQLRDPRGSDIAGTTSTVDEQIQWMYRQPNPVPVGNIYRRWIQIGLQKCVRMYNPTNILDVKQGPKESFQSYVDRFYKSLRAEQTDPAVKNWMTQTLLIQNANPDCKLVLKGLGMNPTLEEMLTACQGVGGPSQKARLMAEALKEALTPAPIPFAAAQQRRAIRCWNCGKEGHSAKQCRAPRRQGCWKCGKSGHIMANCPERQAGFLDGPTGKAAPQLPRGPSSSGADTNSTPNRSSSGPVGEIYAAREKAERAEGETIQGGDGGLTAPRAGRDAPQRGDRGLATPQFSLWKRPVVTAFIEDQPVEVLLDTGADDSIVAGIELGDNYTPKIVGGIGGFINTKEYKNVEIKVLNKRVRATIMTGDTPINIFGRNILATLGMSLNLPVAKLDPIKVTLKPGKDGPRLKQWPLTKEKIEALKEICEKMEREGQLEEAPPTNPYNTPTFAIKKKDKNKWRMLIDFRELNRVTQDFTEIQLGIPHPAGLAKKKRITVLDVGDAYFSIPLHEDFRQYTAFTLPSVNNAEPEKRYVYKVLPQGWKGSPAIFQFMMRQILEPFRKANPDVILIQYMDDILIASDRTGLEHDKVVLQLKELLNGLGFSTPDEKFQKDPPFQWMGYELWPTKWKLQKIQLPQKEIWTVNDIQKLVGVLNWAAQIYPGIKTKHLCKLIRGKMTLTEEVQWTELAEAELEENKIILSQEQEGSYYQEEEELEATVIKSQDNQWAYKIHQGERVLKVGKYAKIKNTHTNGVRLLAQVVQKIGKEALVIWGRVPKFHLPVERDTWEQWWDNYWQVTWVPEWDFVSTPPLVRLTFNLVGDPIPGTETFYTDGSCNRQSKEGKAGYVTDRGRDRVRVLEQTSNQQAELEAFAMALADSGPKVNIIVDSQYVMGIVAGQPTESENRIVNQIIEDMIKKEAVYVAWVPAHKGIGGNQEVDHLVSQGIRQVLFLEKIEPAQEEHEKYHSNIKELTHKFGIPQLVARQIVNTCAQCQQKGEAIHGQVNAEIGVWQMDCTHLEGKIIIVAVHVASGFIEAEVIPQESGRQTALFLLKLASRWPITHLHTDNGPNFTSQEVKMVAWWIGIEQSFGVPYNPQSQGVVEAMNHHLKNQISRIREQANTIETIVLMAVHCMNFKRRGGIGDMTPAERLINMITTEQEIQFLQRKNSNFKKFQVYYREGRDQLWKGPGELLWKGDGAVIVKVGADIKVVPRRKAKIIRDYGGRQELDSSSHLEGAREDGEVA.

A lipid anchor (N-myristoyl glycine; by host) is attached at glycine 2. The interaction with Gp41 stretch occupies residues valine 7–leucine 31. A Nuclear export signal motif is present at residues leucine 16–arginine 22. A Nuclear localization signal motif is present at residues lysine 26 to lysine 32. Residues asparagine 191–glutamine 228 are interaction with human PPIA/CYPA and NUP153. The dimerization/Multimerization of capsid protein p24 stretch occupies residues tyrosine 279–methionine 365. CCHC-type zinc fingers lie at residues isoleucine 389–alanine 406 and glutamine 410–glutamate 427. The interval leucine 433–leucine 509 is disordered. Residues proline 448–glycine 465 are compositionally biased toward polar residues. Basic and acidic residues-rich tracts occupy residues alanine 472–glycine 482 and alanine 497–arginine 507. The segment at proline 512–leucine 516 is dimerization of protease. The region spanning glutamate 532–leucine 601 is the Peptidase A2 domain. The active-site For protease activity; shared with dimeric partner is aspartate 536. 2 dimerization of protease regions span residues glycine 560–asparagine 566 and asparagine 599–proline 611. One can recognise a Reverse transcriptase domain in the interval glycine 655–tryptophan 845. Residues aspartate 720, aspartate 795, and aspartate 796 each coordinate Mg(2+). The interval phenylalanine 837–tryptophan 845 is RT 'primer grip'. Residues tryptophan 1007 to tryptophan 1023 carry the Tryptophan repeat motif motif. Positions isoleucine 1043–arginine 1166 constitute an RNase H type-1 domain. The Mg(2+) site is built by aspartate 1052, glutamate 1087, aspartate 1107, and aspartate 1158. The segment at glutamate 1172–glutamine 1213 adopts an Integrase-type zinc-finger fold. Histidine 1181, histidine 1185, cysteine 1209, and cysteine 1212 together coordinate Zn(2+). One can recognise an Integrase catalytic domain in the interval valine 1223 to threonine 1374. Mg(2+)-binding residues include aspartate 1233, aspartate 1285, and glutamate 1321. The integrase-type DNA-binding region spans phenylalanine 1392–aspartate 1439.

As to quaternary structure, homotrimer; further assembles as hexamers of trimers. Interacts with gp41 (via C-terminus). Interacts with host CALM1; this interaction induces a conformational change in the Matrix protein, triggering exposure of the myristate group. Interacts with host AP3D1; this interaction allows the polyprotein trafficking to multivesicular bodies during virus assembly. Part of the pre-integration complex (PIC) which is composed of viral genome, matrix protein, Vpr and integrase. Homodimer; the homodimer further multimerizes as homohexamers or homopentamers. Interacts with human PPIA/CYPA. Interacts with human NUP153. Interacts with host PDZD8; this interaction stabilizes the capsid. Interacts with monkey TRIM5; this interaction destabilizes the capsid. In terms of assembly, homodimer, whose active site consists of two apposed aspartic acid residues. As to quaternary structure, heterodimer of p66 RT and p51 RT (RT p66/p51). Heterodimerization of RT is essential for DNA polymerase activity. The overall folding of the subdomains is similar in p66 RT and p51 RT but the spatial arrangements of the subdomains are dramatically different. Homotetramer; may further associate as a homohexadecamer. Part of the pre-integration complex (PIC) which is composed of viral genome, matrix protein, Vpr and integrase. Interacts with human SMARCB1/INI1 and human PSIP1/LEDGF isoform 1. Interacts with human KPNA3; this interaction might play a role in nuclear import of the pre-integration complex. Interacts with human NUP153; this interaction might play a role in nuclear import of the pre-integration complex. Mg(2+) serves as cofactor. In terms of processing, specific enzymatic cleavages by the viral protease yield mature proteins. The protease is released by autocatalytic cleavage. The polyprotein is cleaved during and after budding, this process is termed maturation. Proteolytic cleavage of p66 RT removes the RNase H domain to yield the p51 RT subunit. Nucleocapsid protein p7 might be further cleaved after virus entry.

It localises to the host cell membrane. It is found in the host endosome. Its subcellular location is the host multivesicular body. The protein localises to the virion membrane. The protein resides in the host nucleus. It localises to the host cytoplasm. It is found in the virion. The catalysed reaction is Endopeptidase for which the P1 residue is preferably hydrophobic.. It catalyses the reaction Endohydrolysis of RNA in RNA/DNA hybrids. Three different cleavage modes: 1. sequence-specific internal cleavage of RNA. Human immunodeficiency virus type 1 and Moloney murine leukemia virus enzymes prefer to cleave the RNA strand one nucleotide away from the RNA-DNA junction. 2. RNA 5'-end directed cleavage 13-19 nucleotides from the RNA end. 3. DNA 3'-end directed cleavage 15-20 nucleotides away from the primer terminus.. The enzyme catalyses 3'-end directed exonucleolytic cleavage of viral RNA-DNA hybrid.. It carries out the reaction DNA(n) + a 2'-deoxyribonucleoside 5'-triphosphate = DNA(n+1) + diphosphate. Its activity is regulated as follows. Protease: The viral protease is inhibited by many synthetic protease inhibitors (PIs), such as amprenavir, atazanavir, indinavir, loprinavir, nelfinavir, ritonavir and saquinavir. Use of protease inhibitors in tritherapy regimens permit more ambitious therapeutic strategies. Reverse transcriptase/ribonuclease H: RT can be inhibited either by nucleoside RT inhibitors (NRTIs) or by non nucleoside RT inhibitors (NNRTIs). NRTIs act as chain terminators, whereas NNRTIs inhibit DNA polymerization by binding a small hydrophobic pocket near the RT active site and inducing an allosteric change in this region. Classical NRTIs are abacavir, adefovir (PMEA), didanosine (ddI), lamivudine (3TC), stavudine (d4T), tenofovir (PMPA), zalcitabine (ddC), and zidovudine (AZT). Classical NNRTIs are atevirdine (BHAP U-87201E), delavirdine, efavirenz (DMP-266), emivirine (I-EBU), and nevirapine (BI-RG-587). The tritherapies used as a basic effective treatment of AIDS associate two NRTIs and one NNRTI. Functionally, mediates, with Gag polyprotein, the essential events in virion assembly, including binding the plasma membrane, making the protein-protein interactions necessary to create spherical particles, recruiting the viral Env proteins, and packaging the genomic RNA via direct interactions with the RNA packaging sequence (Psi). Gag-Pol polyprotein may regulate its own translation, by the binding genomic RNA in the 5'-UTR. At low concentration, the polyprotein would promote translation, whereas at high concentration, the polyprotein would encapsidate genomic RNA and then shut off translation. Targets the polyprotein to the plasma membrane via a multipartite membrane-binding signal, that includes its myristoylated N-terminus. Matrix protein is part of the pre-integration complex. Implicated in the release from host cell mediated by Vpu. Binds to RNA. In terms of biological role, forms the conical core that encapsulates the genomic RNA-nucleocapsid complex in the virion. Most core are conical, with only 7% tubular. The core is constituted by capsid protein hexamer subunits. The core is disassembled soon after virion entry. Host restriction factors such as TRIM5-alpha or TRIMCyp bind retroviral capsids and cause premature capsid disassembly, leading to blocks in reverse transcription. Capsid restriction by TRIM5 is one of the factors which restricts HIV-1 to the human species. Host PIN1 apparently facilitates the virion uncoating. On the other hand, interactions with PDZD8 or CYPA stabilize the capsid. Its function is as follows. Encapsulates and protects viral dimeric unspliced genomic RNA (gRNA). Binds these RNAs through its zinc fingers. Acts as a nucleic acid chaperone which is involved in rearangement of nucleic acid secondary structure during gRNA retrotranscription. Also facilitates template switch leading to recombination. As part of the polyprotein, participates in gRNA dimerization, packaging, tRNA incorporation and virion assembly. Functionally, aspartyl protease that mediates proteolytic cleavages of Gag and Gag-Pol polyproteins during or shortly after the release of the virion from the plasma membrane. Cleavages take place as an ordered, step-wise cascade to yield mature proteins. This process is called maturation. Displays maximal activity during the budding process just prior to particle release from the cell. Also cleaves Nef and Vif, probably concomitantly with viral structural proteins on maturation of virus particles. Hydrolyzes host EIF4GI and PABP1 in order to shut off the capped cellular mRNA translation. The resulting inhibition of cellular protein synthesis serves to ensure maximal viral gene expression and to evade host immune response. Multifunctional enzyme that converts the viral RNA genome into dsDNA in the cytoplasm, shortly after virus entry into the cell. This enzyme displays a DNA polymerase activity that can copy either DNA or RNA templates, and a ribonuclease H (RNase H) activity that cleaves the RNA strand of RNA-DNA heteroduplexes in a partially processive 3' to 5' endonucleasic mode. Conversion of viral genomic RNA into dsDNA requires many steps. A tRNA(3)-Lys binds to the primer-binding site (PBS) situated at the 5'-end of the viral RNA. RT uses the 3' end of the tRNA primer to perform a short round of RNA-dependent minus-strand DNA synthesis. The reading proceeds through the U5 region and ends after the repeated (R) region which is present at both ends of viral RNA. The portion of the RNA-DNA heteroduplex is digested by the RNase H, resulting in a ssDNA product attached to the tRNA primer. This ssDNA/tRNA hybridizes with the identical R region situated at the 3' end of viral RNA. This template exchange, known as minus-strand DNA strong stop transfer, can be either intra- or intermolecular. RT uses the 3' end of this newly synthesized short ssDNA to perform the RNA-dependent minus-strand DNA synthesis of the whole template. RNase H digests the RNA template except for two polypurine tracts (PPTs) situated at the 5'-end and near the center of the genome. It is not clear if both polymerase and RNase H activities are simultaneous. RNase H probably can proceed both in a polymerase-dependent (RNA cut into small fragments by the same RT performing DNA synthesis) and a polymerase-independent mode (cleavage of remaining RNA fragments by free RTs). Secondly, RT performs DNA-directed plus-strand DNA synthesis using the PPTs that have not been removed by RNase H as primers. PPTs and tRNA primers are then removed by RNase H. The 3' and 5' ssDNA PBS regions hybridize to form a circular dsDNA intermediate. Strand displacement synthesis by RT to the PBS and PPT ends produces a blunt ended, linear dsDNA copy of the viral genome that includes long terminal repeats (LTRs) at both ends. In terms of biological role, catalyzes viral DNA integration into the host chromosome, by performing a series of DNA cutting and joining reactions. This enzyme activity takes place after virion entry into a cell and reverse transcription of the RNA genome in dsDNA. The first step in the integration process is 3' processing. This step requires a complex comprising the viral genome, matrix protein, Vpr and integrase. This complex is called the pre-integration complex (PIC). The integrase protein removes 2 nucleotides from each 3' end of the viral DNA, leaving recessed CA OH's at the 3' ends. In the second step, the PIC enters cell nucleus. This process is mediated through integrase and Vpr proteins, and allows the virus to infect a non dividing cell. This ability to enter the nucleus is specific of lentiviruses, other retroviruses cannot and rely on cell division to access cell chromosomes. In the third step, termed strand transfer, the integrase protein joins the previously processed 3' ends to the 5' ends of strands of target cellular DNA at the site of integration. The 5'-ends are produced by integrase-catalyzed staggered cuts, 5 bp apart. A Y-shaped, gapped, recombination intermediate results, with the 5'-ends of the viral DNA strands and the 3' ends of target DNA strands remaining unjoined, flanking a gap of 5 bp. The last step is viral DNA integration into host chromosome. This involves host DNA repair synthesis in which the 5 bp gaps between the unjoined strands are filled in and then ligated. Since this process occurs at both cuts flanking the HIV genome, a 5 bp duplication of host DNA is produced at the ends of HIV-1 integration. Alternatively, Integrase may catalyze the excision of viral DNA just after strand transfer, this is termed disintegration. The chain is Gag-Pol polyprotein (gag-pol) from Human immunodeficiency virus type 2 subtype A (isolate D194) (HIV-2).